A 380-amino-acid polypeptide reads, in one-letter code: 1-deoxy-D-xylulose 5-phosphate reductoisomerase (380 aa).

T10, G11, S12, I13, G36, R37, N38, and N120 together coordinate NADPH. Residue K121 participates in 1-deoxy-D-xylulose 5-phosphate binding. An NADPH-binding site is contributed by E122. D146 contacts Mn(2+). 1-deoxy-D-xylulose 5-phosphate-binding residues include S147, E148, S172, and H195. E148 provides a ligand contact to Mn(2+). An NADPH-binding site is contributed by G201. 1-deoxy-D-xylulose 5-phosphate contacts are provided by S208, N213, K214, and E217. Position 217 (E217) interacts with Mn(2+).

This sequence belongs to the DXR family. Mg(2+) serves as cofactor. It depends on Mn(2+) as a cofactor.

The catalysed reaction is 2-C-methyl-D-erythritol 4-phosphate + NADP(+) = 1-deoxy-D-xylulose 5-phosphate + NADPH + H(+). It functions in the pathway isoprenoid biosynthesis; isopentenyl diphosphate biosynthesis via DXP pathway; isopentenyl diphosphate from 1-deoxy-D-xylulose 5-phosphate: step 1/6. Functionally, catalyzes the NADPH-dependent rearrangement and reduction of 1-deoxy-D-xylulose-5-phosphate (DXP) to 2-C-methyl-D-erythritol 4-phosphate (MEP). This is 1-deoxy-D-xylulose 5-phosphate reductoisomerase from Listeria monocytogenes serotype 4b (strain F2365).